Here is a 143-residue protein sequence, read N- to C-terminus: Putative pre-16S rRNA nuclease (143 aa).

It belongs to the YqgF nuclease family.

Its subcellular location is the cytoplasm. Its function is as follows. Could be a nuclease involved in processing of the 5'-end of pre-16S rRNA. The chain is Putative pre-16S rRNA nuclease from Agathobacter rectalis (strain ATCC 33656 / DSM 3377 / JCM 17463 / KCTC 5835 / VPI 0990) (Eubacterium rectale).